The following is a 163-amino-acid chain: Extracellular giant hemoglobin major globin subunit B2 (163 aa).

The signal sequence occupies residues Met-1–Ala-16. In terms of domain architecture, Globin spans Cys-19–Leu-163. Cys-20 and Cys-151 form a disulfide bridge. Residue Cys-83 coordinates hydrogen sulfide. His-114 is a binding site for heme b.

The protein belongs to the globin family. The 400 kDa hemoglobin consists of a spherical 24-mer arranged as a double layer of dome-shaped dodecamers. Each dodecamer is composed of the 3-fold trimer of the tetramer A1-A2-B1-B2 having one intra-tetramer (A1-B2) disulfide bond and one inter-tetramer (B1-B2) disulfide bond per tetramer.

The protein localises to the secreted. Functionally, the extracellular giant hemoglobin is able to bind and transport oxygen and hydrosulfide simultaneously and reversibly at two different sites. The chain is Extracellular giant hemoglobin major globin subunit B2 (ghbB2) from Oligobrachia mashikoi (Beard worm).